We begin with the raw amino-acid sequence, 345 residues long: Solute carrier family 25 member 43 (345 aa).

3 Solcar repeats span residues Thr-11–Leu-100, Ser-104–His-195, and Thr-199–Asn-297. Transmembrane regions (helical) follow at residues Leu-16–Val-36, Phe-67–Ala-87, Ile-109–Val-129, Gly-165–Ile-185, Phe-204–Val-224, and Val-261–Leu-281.

Belongs to the mitochondrial carrier (TC 2.A.29) family.

Its subcellular location is the mitochondrion inner membrane. The polypeptide is Solute carrier family 25 member 43 (slc25a43) (Danio rerio (Zebrafish)).